Consider the following 179-residue polypeptide: Large ribosomal subunit protein uL5 (179 aa).

N6-acetyllysine is present on Lys3.

The protein belongs to the universal ribosomal protein uL5 family. Part of the 50S ribosomal subunit; part of the 5S rRNA/L5/L18/L25 subcomplex. Contacts the 5S rRNA and the P site tRNA. Forms a bridge to the 30S subunit in the 70S ribosome.

This is one of the proteins that bind and probably mediate the attachment of the 5S RNA into the large ribosomal subunit, where it forms part of the central protuberance. In the 70S ribosome it contacts protein S13 of the 30S subunit (bridge B1b), connecting the 2 subunits; this bridge is implicated in subunit movement. Contacts the P site tRNA; the 5S rRNA and some of its associated proteins might help stabilize positioning of ribosome-bound tRNAs. The polypeptide is Large ribosomal subunit protein uL5 (Escherichia coli O45:K1 (strain S88 / ExPEC)).